Consider the following 394-residue polypeptide: Queuine tRNA-ribosyltransferase (394 aa).

Asp-99 acts as the Proton acceptor in catalysis. Substrate is bound by residues 99–103 (DSGGF), Asp-153, Gln-195, and Gly-222. The interval 253 to 259 (GVGHPED) is RNA binding. The Nucleophile role is filled by Asp-272. The tract at residues 277-281 (TRTGR) is RNA binding; important for wobble base 34 recognition. Zn(2+) is bound by residues Cys-310, Cys-312, Cys-315, and His-341.

Belongs to the queuine tRNA-ribosyltransferase family. In terms of assembly, homodimer. Within each dimer, one monomer is responsible for RNA recognition and catalysis, while the other monomer binds to the replacement base PreQ1. It depends on Zn(2+) as a cofactor.

The catalysed reaction is 7-aminomethyl-7-carbaguanine + guanosine(34) in tRNA = 7-aminomethyl-7-carbaguanosine(34) in tRNA + guanine. The protein operates within tRNA modification; tRNA-queuosine biosynthesis. Catalyzes the base-exchange of a guanine (G) residue with the queuine precursor 7-aminomethyl-7-deazaguanine (PreQ1) at position 34 (anticodon wobble position) in tRNAs with GU(N) anticodons (tRNA-Asp, -Asn, -His and -Tyr). Catalysis occurs through a double-displacement mechanism. The nucleophile active site attacks the C1' of nucleotide 34 to detach the guanine base from the RNA, forming a covalent enzyme-RNA intermediate. The proton acceptor active site deprotonates the incoming PreQ1, allowing a nucleophilic attack on the C1' of the ribose to form the product. After dissociation, two additional enzymatic reactions on the tRNA convert PreQ1 to queuine (Q), resulting in the hypermodified nucleoside queuosine (7-(((4,5-cis-dihydroxy-2-cyclopenten-1-yl)amino)methyl)-7-deazaguanosine). The chain is Queuine tRNA-ribosyltransferase from Deinococcus radiodurans (strain ATCC 13939 / DSM 20539 / JCM 16871 / CCUG 27074 / LMG 4051 / NBRC 15346 / NCIMB 9279 / VKM B-1422 / R1).